Reading from the N-terminus, the 815-residue chain is Ent-sandaracopimara-8(14),15-diene synthase, chloroplastic (815 aa).

A chloroplast-targeting transit peptide spans 1-38 (MLPSSICSMGQIPRTSPHYYGMLPKQMSKGHPPMVTRA). Positions 550, 554, 696, 700, and 704 each coordinate Mg(2+). The short motif at 550 to 554 (DDFFD) is the DDXXD motif element.

The protein belongs to the terpene synthase family. The cofactor is Mg(2+).

It localises to the plastid. The protein localises to the chloroplast. The enzyme catalyses ent-copalyl diphosphate = ent-sandaracopimara-8(14),15-diene + diphosphate. The catalysed reaction is 9alpha-copalyl diphosphate = (12E)-9alpha-labda-8(17),12,14-triene + diphosphate. Functionally, involved in the biosynthesis of oryzalexin A-F phytoalexins. Catalyzes the conversion of ent-copalyl diphosphate to the phytoalexin precursor ent-sandaracopimaradiene. This Oryza sativa subsp. japonica (Rice) protein is Ent-sandaracopimara-8(14),15-diene synthase, chloroplastic.